The following is a 106-amino-acid chain: Small ribosomal subunit protein uS10 (106 aa).

It belongs to the universal ribosomal protein uS10 family. In terms of assembly, part of the 30S ribosomal subunit.

In terms of biological role, involved in the binding of tRNA to the ribosomes. This Prochlorococcus marinus (strain MIT 9515) protein is Small ribosomal subunit protein uS10.